A 44-amino-acid chain; its full sequence is uncharacterized protein (44 aa).

This is an uncharacterized protein from Treponema pallidum (strain Nichols).